We begin with the raw amino-acid sequence, 726 residues long: MDSSAKTLTEDKQVYRVEGFSCANCAGKFEKNVKQLAGVQDAKVNFGASKIDVYGNASVQELEKAGAFENLKVFPEKLANSSMQAVKEDTKAPKEEKIPFYKKHSTLLFATLLIAFGYLSHFVNGEDNLVTSMLFVGSIVIGGYSLFKVGFQNLIRFDFDMKTLMTVAVIGAAIIGEWAEASIVVVLFAISEALERFSMDRARQSIRSLMDIAPKEALVMRNGQEIMIHVDDIAVGDIMIVKPGEKIAMDGIIINGVSAVNQAAITGESVPVAKTVDDEVFAGTLNEEGLLEVKITKYVEDTTISKIIHLVEEAQGERAPAQAFVDKFAKYYTPIIMVIAALVAVVPPLFFGGSWDTWVYQGLAVLVVGCPCALVISTPISIVSAIGNAAKKGVLIKGGVYLEELGAIKAIAFDKTGTLTKGVPVVTDFKVLNDQVEEKELFSIITALEYRSQHPLASAIMKKAEQDNITYSDVRVEDFTSITGRGIQGNIDGTTYYIGSPRLFKELNVSDFSLEFENKVKVLQNQGKTAMIIGTDQTILGVIAVADEVRETSKNVIQKLHQLGIKQTIMLTGDNQGTAEAIGAHVGVSDIQSELMPQDKLDYIKKMKAEHGNVAMIGDGVNDAPALAASTVGIAMGGAGTDTAIETADIALMGDDLSKLPFAVRLSRKTLNIIKANITFAIGIKIIALLLVIPGWLTLWIAILSDMGATILVALNSLRLMRVKDK.

The HMA domain occupies D11–F74. Positions 22 and 25 each coordinate Cd(2+). A run of 5 helical transmembrane segments spans residues S105–G125, L129–V149, T163–A179, I335–W355, and L363–V383. The active-site 4-aspartylphosphate intermediate is D414. The next 2 helical transmembrane spans lie at L671–I693 and T698–L720.

The protein belongs to the cation transport ATPase (P-type) (TC 3.A.3) family. Type IB subfamily.

Its subcellular location is the cell membrane. The catalysed reaction is Cd(2+)(in) + ATP + H2O = Cd(2+)(out) + ADP + phosphate + H(+). Couples the hydrolysis of ATP with the export of cadmium. The protein is Probable cadmium-transporting ATPase (cadA) of Staphylococcus aureus (strain MRSA252).